We begin with the raw amino-acid sequence, 285 residues long: Nucleotide-binding protein in ptsN-ptsO intergenic region (285 aa).

Position 8 to 15 (8 to 15) interacts with ATP; that stretch reads GRSGSGKS. 60–63 lines the GTP pocket; the sequence is DARN.

The protein belongs to the RapZ-like family.

In terms of biological role, displays ATPase and GTPase activities. The protein is Nucleotide-binding protein in ptsN-ptsO intergenic region of Stutzerimonas stutzeri (Pseudomonas stutzeri).